Consider the following 176-residue polypeptide: Ribosome maturation factor RimM (176 aa).

A PRC barrel domain is found at K93 to I172.

It belongs to the RimM family. As to quaternary structure, binds ribosomal protein uS19.

It is found in the cytoplasm. Functionally, an accessory protein needed during the final step in the assembly of 30S ribosomal subunit, possibly for assembly of the head region. Essential for efficient processing of 16S rRNA. May be needed both before and after RbfA during the maturation of 16S rRNA. It has affinity for free ribosomal 30S subunits but not for 70S ribosomes. This is Ribosome maturation factor RimM from Campylobacter fetus subsp. fetus (strain 82-40).